Here is a 373-residue protein sequence, read N- to C-terminus: Lipoyl synthase, mitochondrial (373 aa).

The N-terminal 26 residues, 1-26 (MALRCWDAARSLGSRIFGRYACSVRA), are a transit peptide targeting the mitochondrion. Residues Cys105, Cys110, Cys116, Cys136, Cys140, Cys143, and Ser351 each contribute to the [4Fe-4S] cluster site. A Radical SAM core domain is found at 121 to 340 (EYATATATIM…EEVGNELGFH (220 aa)).

This sequence belongs to the radical SAM superfamily. Lipoyl synthase family. Requires [4Fe-4S] cluster as cofactor.

It localises to the mitochondrion. The enzyme catalyses [[Fe-S] cluster scaffold protein carrying a second [4Fe-4S](2+) cluster] + N(6)-octanoyl-L-lysyl-[protein] + 2 oxidized [2Fe-2S]-[ferredoxin] + 2 S-adenosyl-L-methionine + 4 H(+) = [[Fe-S] cluster scaffold protein] + N(6)-[(R)-dihydrolipoyl]-L-lysyl-[protein] + 4 Fe(3+) + 2 hydrogen sulfide + 2 5'-deoxyadenosine + 2 L-methionine + 2 reduced [2Fe-2S]-[ferredoxin]. Its pathway is protein modification; protein lipoylation via endogenous pathway; protein N(6)-(lipoyl)lysine from octanoyl-[acyl-carrier-protein]: step 2/2. In terms of biological role, catalyzes the radical-mediated insertion of two sulfur atoms into the C-6 and C-8 positions of the octanoyl moiety bound to the lipoyl domains of lipoate-dependent enzymes, thereby converting the octanoylated domains into lipoylated derivatives. This Rattus norvegicus (Rat) protein is Lipoyl synthase, mitochondrial (Lias).